Reading from the N-terminus, the 307-residue chain is Aspartate carbamoyltransferase catalytic subunit (307 aa).

Carbamoyl phosphate contacts are provided by Arg54 and Thr55. An L-aspartate-binding site is contributed by Lys83. Carbamoyl phosphate-binding residues include Arg104, His132, and Gln135. L-aspartate-binding residues include Arg165 and Arg228. Residues Leu267 and Pro268 each contribute to the carbamoyl phosphate site.

It belongs to the aspartate/ornithine carbamoyltransferase superfamily. ATCase family. In terms of assembly, heterododecamer (2C3:3R2) of six catalytic PyrB chains organized as two trimers (C3), and six regulatory PyrI chains organized as three dimers (R2).

It catalyses the reaction carbamoyl phosphate + L-aspartate = N-carbamoyl-L-aspartate + phosphate + H(+). Its pathway is pyrimidine metabolism; UMP biosynthesis via de novo pathway; (S)-dihydroorotate from bicarbonate: step 2/3. In terms of biological role, catalyzes the condensation of carbamoyl phosphate and aspartate to form carbamoyl aspartate and inorganic phosphate, the committed step in the de novo pyrimidine nucleotide biosynthesis pathway. In Clostridium botulinum (strain Eklund 17B / Type B), this protein is Aspartate carbamoyltransferase catalytic subunit.